The following is a 145-amino-acid chain: Major pollen allergen Lig v 1 (145 aa).

Disulfide bonds link cysteine 19-cysteine 90, cysteine 22-cysteine 131, and cysteine 43-cysteine 78. Asparagine 111 carries N-linked (GlcNAc...) asparagine glycosylation.

This sequence belongs to the Ole e I family.

The protein resides in the secreted. This Ligustrum vulgare (Common privet) protein is Major pollen allergen Lig v 1.